Reading from the N-terminus, the 70-residue chain is Protease inhibitor HPI (70 aa).

N-acetylalanine is present on Ala2. The residue at position 5 (Cys5) is an S-glutathionyl cysteine; alternate.

The protein belongs to the protease inhibitor I13 (potato type I serine protease inhibitor) family. In terms of assembly, monomer and homodimer; disulfide-linked. In terms of processing, occurs in 3 forms that differ in the modification of Cys-5, HPI-1 forms a homodimer through a disulfide bond, HPI-2a is modified by glutathionylation, and HPI-2b is covalently modified by addition of an unidentified adduct but not by a disulfide linkage.

Inhibitor of serine proteases, strongly inhibits subtilisin A and weakly inhibits trypsin. Does not inhibit chymotrypsin, papain, pepsin, pronase E, protease type XIII and thermolysin. HPI-1 inhibits subtilisin A with an Ki of 0.21 nM. HPI-2a inhibits subtilisin A with an Ki of 0.08 nM. HPI-2b inhibits subtilisin A with an Ki of 0.1 nM. The polypeptide is Protease inhibitor HPI (Hevea brasiliensis (Para rubber tree)).